A 986-amino-acid chain; its full sequence is DNA polymerase I (986 aa).

Residues 1–303 (MFMSAKSPLL…RTFIDKIQAF (303 aa)) form the 5'-3' exonuclease domain. A 3'-5' exonuclease domain is found at 304-592 (HRNFSDNQSP…MEDRGIRIDC (289 aa)). Positions 308–327 (SDNQSPVPMGNEADNGEPKK) are disordered. Residues 593–986 (DYLQTLSQQL…HRGSNWMEAK (394 aa)) form a polymerase region.

Belongs to the DNA polymerase type-A family. Single-chain monomer with multiple functions.

The catalysed reaction is DNA(n) + a 2'-deoxyribonucleoside 5'-triphosphate = DNA(n+1) + diphosphate. Its function is as follows. In addition to polymerase activity, this DNA polymerase exhibits 3'-5' and 5'-3' exonuclease activity. In Synechocystis sp. (strain ATCC 27184 / PCC 6803 / Kazusa), this protein is DNA polymerase I (polA).